The chain runs to 55 residues: Conotoxin Cal22d (55 aa).

A propeptide spanning residues 1–5 (GRPSA) is cleaved from the precursor.

Post-translationally, contains 4 disulfide bonds. Expressed by the venom duct.

The protein resides in the secreted. Its function is as follows. Probable neurotoxin with unknown target. Possibly targets ion channels. This chain is Conotoxin Cal22d, found in Californiconus californicus (California cone).